The primary structure comprises 441 residues: Carbohydrate sulfotransferase 3 (441 aa).

The Cytoplasmic portion of the chain corresponds to 1–4 (MKMR). A helical; Signal-anchor for type II membrane protein membrane pass occupies residues 5–21 (SKYAIILFFVVALVIIE). The Lumenal portion of the chain corresponds to 22–441 (KERNIISRVS…LLENRNFWIT (420 aa)). Residues Asn47 and Asn58 are each glycosylated (N-linked (GlcNAc...) asparagine). 106–112 (TRTGSSF) contacts 3'-phosphoadenylyl sulfate. An N-linked (GlcNAc...) asparagine glycan is attached at Asn221. 266–274 (RDPRAVLAS) is a binding site for 3'-phosphoadenylyl sulfate. Asn427 carries an N-linked (GlcNAc...) asparagine glycan.

It belongs to the sulfotransferase 1 family. Gal/GlcNAc/GalNAc subfamily. N-glycosylated. In terms of tissue distribution, in electric organ, it is moderately expressed in spinal cord and electric lobe and undetectable in non-neural tissues. Expressed in a punctate distribution in the innervated portion of electrocytes. In the CNS, it is localized within the somas of motor neurons and neurons of the electromotor nucleus.

The protein resides in the golgi apparatus membrane. It carries out the reaction chondroitin beta-D-glucuronate + n 3'-phosphoadenylyl sulfate = chondroitin 6'-sulfate + n adenosine 3',5'-bisphosphate + n H(+). The catalysed reaction is 3'-phosphoadenylyl sulfate + keratan = adenosine 3',5'-bisphosphate + keratan 6'-sulfate.. Its function is as follows. Sulfotransferase that utilizes 3'-phospho-5'-adenylyl sulfate (PAPS) as sulfonate donor to catalyze the transfer of sulfate to position 6 of the N-acetylgalactosamine (GalNAc) residue of chondroitin. Chondroitin sulfate constitutes the predominant proteoglycan present in cartilage and is distributed on the surfaces of many cells and extracellular matrices. Catalyzes with a lower efficiency the sulfation of Gal residues of keratan sulfate, another glycosaminoglycan. Can also catalyze the sulfation of the Gal residues in sialyl N-acetyllactosamine (sialyl LacNAc) oligosaccharides. This is Carbohydrate sulfotransferase 3 (CHST3) from Tetronarce californica (Pacific electric ray).